The primary structure comprises 165 residues: uncharacterized protein (165 aa).

Residues 15-35 (MSPAIILIGVLILIVLFVIKF) form a helical membrane-spanning segment. Residues 67–119 (ISQLNTLRATLAAKKKELKTLRTARKKECTEQLAKTQAEVDRIQAKIDNFSSR) are a coiled coil. The segment at 123–156 (VPLPGGEVGPPYNPPPPRTNTRPNPRPNPRPAQL) is disordered. Residues 133-154 (PYNPPPPRTNTRPNPRPNPRPA) are compositionally biased toward pro residues.

It is found in the membrane. This is an uncharacterized protein from Acheta domesticus (House cricket).